We begin with the raw amino-acid sequence, 698 residues long: Elongation factor G (698 aa).

The 276-residue stretch at 10 to 285 (ASTRNIGIMA…AVVDFLPNPL (276 aa)) folds into the tr-type G domain. Residues 19-26 (AHIDAGKT), 83-87 (DTPGH), and 137-140 (NKMD) each bind GTP.

This sequence belongs to the TRAFAC class translation factor GTPase superfamily. Classic translation factor GTPase family. EF-G/EF-2 subfamily.

Its subcellular location is the cytoplasm. Functionally, catalyzes the GTP-dependent ribosomal translocation step during translation elongation. During this step, the ribosome changes from the pre-translocational (PRE) to the post-translocational (POST) state as the newly formed A-site-bound peptidyl-tRNA and P-site-bound deacylated tRNA move to the P and E sites, respectively. Catalyzes the coordinated movement of the two tRNA molecules, the mRNA and conformational changes in the ribosome. In Frankia alni (strain DSM 45986 / CECT 9034 / ACN14a), this protein is Elongation factor G.